Consider the following 122-residue polypeptide: Putative protein adenylyltransferase MJ1547 (122 aa).

The GSX(10)DXD motif motif lies at 11-25; it reads GSYAKNEYTKRSDID. 3 residues coordinate Mg(2+): Asp23, Asp25, and Asp48.

Belongs to the MntA antitoxin family. Probably forms a complex with cognate toxin MJ1548. Requires Mg(2+) as cofactor.

The enzyme catalyses L-tyrosyl-[protein] + ATP = O-(5'-adenylyl)-L-tyrosyl-[protein] + diphosphate. It catalyses the reaction O-(5'-adenylyl)-L-tyrosyl-[protein] + ATP = O-[5'-(adenylyl-(5'-&gt;3')-adenylyl)]-L-tyrosyl-[protein] + diphosphate. Its function is as follows. Probable antitoxin component of a putative type VII toxin-antitoxin (TA) system. Neutralizes cognate toxic MJ1548 by di-AMPylation. This Methanocaldococcus jannaschii (strain ATCC 43067 / DSM 2661 / JAL-1 / JCM 10045 / NBRC 100440) (Methanococcus jannaschii) protein is Putative protein adenylyltransferase MJ1547.